The following is a 163-amino-acid chain: MEALVALQQTLSWFLLLVVVILIFFLLLSCLTQLRRLITKRMTKMENNRKVRNQNHFCKVNIALAELLTVSTDDTDMPLEKKSNSINRRVPTCTYIYMCACVYMSDIYMSNRLSKVFTLIAASIGREYCQIADALQAKKPLKNRWENGLARLSDLRAWTLKVA.

The helical transmembrane segment at 11-31 threads the bilayer; the sequence is LSWFLLLVVVILIFFLLLSCL.

It is found in the membrane. This is an uncharacterized protein from Saccharomyces cerevisiae (strain ATCC 204508 / S288c) (Baker's yeast).